We begin with the raw amino-acid sequence, 296 residues long: Acetylglutamate kinase (296 aa).

Residues 69–70 (GG), Arg-91, and Asn-192 contribute to the substrate site.

The protein belongs to the acetylglutamate kinase family. ArgB subfamily.

Its subcellular location is the cytoplasm. It carries out the reaction N-acetyl-L-glutamate + ATP = N-acetyl-L-glutamyl 5-phosphate + ADP. The protein operates within amino-acid biosynthesis; L-arginine biosynthesis; N(2)-acetyl-L-ornithine from L-glutamate: step 2/4. In terms of biological role, catalyzes the ATP-dependent phosphorylation of N-acetyl-L-glutamate. The sequence is that of Acetylglutamate kinase from Ruthia magnifica subsp. Calyptogena magnifica.